A 451-amino-acid chain; its full sequence is Exodeoxyribonuclease 7 large subunit (451 aa).

This sequence belongs to the XseA family. As to quaternary structure, heterooligomer composed of large and small subunits.

It is found in the cytoplasm. The enzyme catalyses Exonucleolytic cleavage in either 5'- to 3'- or 3'- to 5'-direction to yield nucleoside 5'-phosphates.. In terms of biological role, bidirectionally degrades single-stranded DNA into large acid-insoluble oligonucleotides, which are then degraded further into small acid-soluble oligonucleotides. This chain is Exodeoxyribonuclease 7 large subunit, found in Bacillus cytotoxicus (strain DSM 22905 / CIP 110041 / 391-98 / NVH 391-98).